Here is a 186-residue protein sequence, read N- to C-terminus: ADP-ribosylation factor-like protein 6 (186 aa).

Gly2 carries N-myristoyl glycine lipidation. Residues 24 to 31, Thr50, 69 to 73, Gly72, 130 to 133, and Ala164 contribute to the GTP site; these read GLDNSGKT, DMSGQ, and NKMD. Mg(2+) is bound at residue Thr50.

Belongs to the small GTPase superfamily. Arf family. As to expression, expressed in brain, heart and eye. Isoform 2 is expressed only in the retina.

It localises to the cell projection. The protein localises to the cilium membrane. Its subcellular location is the cytoplasm. It is found in the cytoskeleton. The protein resides in the cilium axoneme. It localises to the cilium basal body. In terms of biological role, probably involved in membrane protein trafficking at the base of the ciliary organelle. May function in cilia biogenesis. Isoform 2 is required for proper retinal function and organization. This Danio rerio (Zebrafish) protein is ADP-ribosylation factor-like protein 6 (arl6).